A 427-amino-acid chain; its full sequence is Serine--tRNA ligase (427 aa).

L-serine is bound at residue 235–237 (TSE). 266–268 (RSE) contacts ATP. Position 289 (glutamate 289) interacts with L-serine. An ATP-binding site is contributed by 353 to 356 (EISS). Position 388 (serine 388) interacts with L-serine.

The protein belongs to the class-II aminoacyl-tRNA synthetase family. Type-1 seryl-tRNA synthetase subfamily. Homodimer. The tRNA molecule binds across the dimer.

It localises to the cytoplasm. The enzyme catalyses tRNA(Ser) + L-serine + ATP = L-seryl-tRNA(Ser) + AMP + diphosphate + H(+). The catalysed reaction is tRNA(Sec) + L-serine + ATP = L-seryl-tRNA(Sec) + AMP + diphosphate + H(+). Its pathway is aminoacyl-tRNA biosynthesis; selenocysteinyl-tRNA(Sec) biosynthesis; L-seryl-tRNA(Sec) from L-serine and tRNA(Sec): step 1/1. Catalyzes the attachment of serine to tRNA(Ser). Is also able to aminoacylate tRNA(Sec) with serine, to form the misacylated tRNA L-seryl-tRNA(Sec), which will be further converted into selenocysteinyl-tRNA(Sec). This is Serine--tRNA ligase from Chromobacterium violaceum (strain ATCC 12472 / DSM 30191 / JCM 1249 / CCUG 213 / NBRC 12614 / NCIMB 9131 / NCTC 9757 / MK).